The primary structure comprises 503 residues: Mitochondrial antiviral-signaling protein (503 aa).

Residues 1-478 lie on the Cytoplasmic side of the membrane; sequence MTFAEDKTYK…HCASSMPWAK (478 aa). Glycyl lysine isopeptide (Lys-Gly) (interchain with G-Cter in ubiquitin) cross-links involve residues Lys-7 and Lys-10. The CARD domain occupies 10 to 77; the sequence is KYIRDNHSKF…WVEVFIRALQ (68 aa). Residues 10–77 form a required for interaction with NLRX1 region; it reads KYIRDNHSKF…WVEVFIRALQ (68 aa). Cys-79 carries the S-palmitoyl cysteine lipid modification. The disordered stretch occupies residues 119–202; it reads GPSAFAPGHN…HQEQEPELGG (84 aa). An interaction with TRAF2 region spans residues 143–147; that stretch reads PVQDT. A compositionally biased stretch (polar residues) spans 145-166; sequence QDTQPPESPVENSEQLLQTNSG. Phosphoserine is present on residues Ser-152, Ser-157, Ser-172, Ser-186, and Ser-220. Residues 153-158 form an interaction with TRAF6 1 region; that stretch reads PVENSE. Over residues 178–189 the composition is skewed to polar residues; sequence PSPNQQALSPQP. Residue Arg-234 is modified to Asymmetric dimethylarginine. Phosphoserine is present on residues Ser-251 and Ser-256. Lys-302 is covalently cross-linked (Glycyl lysine isopeptide (Lys-Gly) (interchain with G-Cter in ubiquitin)). The tract at residues 337-503 is interaction with DHX33; that stretch reads PSRVPASVAK…MLYRSRRLAQ (167 aa). The segment at 346–398 is disordered; that stretch reads KAPANTIPPERNSKQAKETPEGPATKVTTGGNQTGPNSSIRSLHSGPEMSKPG. The segment covering 356–365 has biased composition (basic and acidic residues); it reads RNSKQAKETP. Positions 371-387 are enriched in polar residues; it reads KVTTGGNQTGPNSSIRS. Phosphoserine is present on Ser-384. Residues 415 to 418 carry the pLxIS motif motif; the sequence is LAIS. Ser-418 carries the phosphoserine; by TBK1 modification. Residues 431–436 form an interaction with TRAF6 2 region; it reads PEENEY. The interval 446 to 466 is disordered; that stretch reads SPSADLLGSPEPLATQQPQEE. Residues 479–496 form a helical membrane-spanning segment; the sequence is WLGATSALLAVFLAVMLY. At 497–503 the chain is on the mitochondrial intermembrane side; it reads RSRRLAQ.

Self-associates and polymerizes (via CARD domains) to form 400 nM long three-stranded helical filaments on mitochondria, filament nucleation requires interaction with RIGI whose CARD domains act as a template for filament assembly. Interacts with RIGI, IFIH1/MDA5, TRAF2, TRAF6 and C1QBP. May interact with FADD, RIPK1, IKBKE, CHUK and IKBKB. Interacts (when phosphorylated) with IRF3; following activation and phosphorylation on the pLxIS motif by TBK1, recruits IRF3. Interacts with NLRX1. Interaction with NLRX1 requires the CARD domain. Interacts with PSMA7. Interacts with TRAFD1. Interacts (via C-terminus) with PCBP2 in a complex containing MAVS/IPS1, PCBP2 and ITCH. Interacts with CYLD. Interacts with SRC. Interacts with DHX58/LGP2 and IKBKE. Interacts with STING1. Interacts with IFIT3 (via N-terminus). Interacts with TBK1 only in the presence of IFIT3. Interacts with TTLL12; the interaction prevents MAVS binding to TBK1 and IKBKE. Interacts with MUL1. Interacts with ANKRD17. Interacts with NDFIP1. Interacts with SMURF1; the interaction is mediated by NDFIP1 and leads to MAVS ubiquitination and degradation. Interacts (via C-terminus) with GPATCH3; the interaction is markedly increased upon viral infection. Directly interacts (via CARD domain) with ATG5 and ATG12, either as ATG5 and ATG12 monomers or as ATG12-ATG5 conjugates. Interacts with DHX33 (via the helicase C-terminal domain). Interacts with DDX3X (via C-terminus); this interaction may occur rapidly, but transiently after viral infection. The interaction with DDX3X potentiates MAVS-mediated IFNB induction. Conversely inhibition of this interaction prevents MAVS-mediated IFNB induction. Transiently interacts with TRAF3 early during viral infection. Interacts with CLPB. Interacts with TRAF3IP3. Interacts with TOMM70; the interaction is enhanced by virus infection. Interacts with ZNFX1. Interacts with DHX15. Interacts with N4BP3; this interaction promotes the polyubiquitination of MAVS. Interacts with TAX1BP1; this interaction induces MAVS polyubiquitination. Interacts with NLRP3; promoting NLRP3 recruitment to mitochondria and activation of the NLRP3 inflammasome. Interacts with ECSIT; this interaction bridges RIGI to the MAVS complex at the mitochondrion. Interacts with UBL7; this interaction promotes MAVS 'Lys-27'-linked ubiquitination leading to type I interferon production. Interacts (via transmembrane domain) with SMIM30/MAVI1 (via transmembrane domain); the interaction disrupts MAVS interaction with RIGI and inhibits MAVS aggregation, resulting in the repression of type I interferon signaling and innate immune responses. In terms of processing, following activation, phosphorylated by TBK1 at Ser-418 in the pLxIS motif. The phosphorylated pLxIS motif constitutes an IRF3-binding motif, leading to recruitment of the transcription factor IRF3 to induce type-I interferons and other cytokines. Post-translationally, ubiquitinated. Undergoes 'Lys-48'-linked polyubiquitination catalyzed by ITCH; ITCH-dependent polyubiquitination is mediated by the interaction with PCBP2 and leads to MAVS/IPS1 proteasomal degradation. Ubiquitinated by RNF125, leading to its degradation by the proteasome. Undergoes 'Lys-48'-linked ubiquitination catalyzed by SMURF1. Undergoes 'Lys-48'-linked ubiquitination catalyzed by MARCHF5 at Lys-7, leading to proteasomal degradation. Ubiquitinated via 'Lys-63'-linked ubiquitination at Lys-10 by TRIM31, promoting MAVS polymerization and formation of three-stranded helical filaments on mitochondria. Undergoes 'Lys-63'-linked ubiquitination leading to enhanced interaction between MAVS and TRAF2. Undergoes 'Lys-27'-linked ubiquitination by UBE2N and TRIM21 leading to enhanced interaction between MAVS and TBK1. Deubiquitinated by USP10 leading to attenuation of RIGI-mediated MAVS aggregation and production of type I interferon. Undergoes 'Lys-48'-linked polyubiquitination catalyzed by RNF115 leading to its degradation. Proteolytically cleaved by apoptotic caspases during apoptosis, leading to its inactivation. Cleavage by CASP3 during virus-induced apoptosis inactivates it, preventing cytokine overproduction. In terms of processing, palmitoylated by ZHDDC4. Palmitoylation promotes MAVS stabilization and activation by inhibiting 'Lys-48'- but facilitating 'Lys-63'-linked ubiquitination.

The protein localises to the mitochondrion outer membrane. Its subcellular location is the mitochondrion. It is found in the peroxisome. Adapter required for innate immune defense against viruses. Acts downstream of DHX33, RIGI and IFIH1/MDA5, which detect intracellular dsRNA produced during viral replication, to coordinate pathways leading to the activation of NF-kappa-B, IRF3 and IRF7, and to the subsequent induction of antiviral cytokines such as IFN-beta and RANTES (CCL5). Peroxisomal and mitochondrial MAVS act sequentially to create an antiviral cellular state. Upon viral infection, peroxisomal MAVS induces the rapid interferon-independent expression of defense factors that provide short-term protection, whereas mitochondrial MAVS activates an interferon-dependent signaling pathway with delayed kinetics, which amplifies and stabilizes the antiviral response. May activate the same pathways following detection of extracellular dsRNA by TLR3. May protect cells from apoptosis. Involved in NLRP3 inflammasome activation by mediating NLRP3 recruitment to mitochondria. The sequence is that of Mitochondrial antiviral-signaling protein from Mus musculus (Mouse).